A 1697-amino-acid polypeptide reads, in one-letter code: SAC3 family protein B (1697 aa).

Disordered stretches follow at residues proline 54–glycine 134, glutamine 167–asparagine 280, glutamate 306–arginine 413, and glutamate 491–aspartate 512. Positions glutamine 120–glycine 134 are enriched in low complexity. Over residues aspartate 178–arginine 192 the composition is skewed to basic and acidic residues. Over residues alanine 193–isoleucine 202 the composition is skewed to polar residues. The span at arginine 215 to isoleucine 227 shows a compositional bias: basic and acidic residues. Polar residues-rich tracts occupy residues methionine 233–valine 243, proline 257–asparagine 280, and arginine 335–threonine 380. Residues asparagine 625–lysine 813 enclose the PCI domain.

The protein belongs to the SAC3 family. In terms of assembly, interacts with SAC3A, EER5 and CML19. Interacts with UCH1 and UCH2.

It is found in the nucleus. In terms of biological role, component of the TREX-2 complex (transcription and export complex 2), a muliprotein complex that functions in docking export-competent ribonucleoprotein particles (mRNPs) to the nuclear entrance of the nuclear pore complex (nuclear basket). TREX-2 participates in mRNA export and accurate chromatin positioning in the nucleus by tethering genes to the nuclear periphery. The protein is SAC3 family protein B of Arabidopsis thaliana (Mouse-ear cress).